The primary structure comprises 340 residues: UDP-3-O-(3-hydroxymyristoyl)glucosamine N-acyltransferase (340 aa).

H239 functions as the Proton acceptor in the catalytic mechanism.

It belongs to the transferase hexapeptide repeat family. LpxD subfamily. Homotrimer.

It carries out the reaction a UDP-3-O-[(3R)-3-hydroxyacyl]-alpha-D-glucosamine + a (3R)-hydroxyacyl-[ACP] = a UDP-2-N,3-O-bis[(3R)-3-hydroxyacyl]-alpha-D-glucosamine + holo-[ACP] + H(+). It catalyses the reaction UDP-3-O-[(3R)-3-hydroxytetradecanoyl]-alpha-D-glucosamine + (3R)-hydroxytetradecanoyl-[ACP] = UDP-2-N,3-O-bis[(3R)-3-hydroxytetradecanoyl]-alpha-D-glucosamine + holo-[ACP] + H(+). It participates in glycolipid biosynthesis; lipid IV(A) biosynthesis; lipid IV(A) from (3R)-3-hydroxytetradecanoyl-[acyl-carrier-protein] and UDP-N-acetyl-alpha-D-glucosamine: step 3/6. Catalyzes the N-acylation of UDP-3-O-(hydroxytetradecanoyl)glucosamine using 3-hydroxytetradecanoyl-ACP as the acyl donor. Is involved in the biosynthesis of lipid A, a phosphorylated glycolipid that anchors the lipopolysaccharide to the outer membrane of the cell. In Yersinia enterocolitica, this protein is UDP-3-O-(3-hydroxymyristoyl)glucosamine N-acyltransferase.